A 1016-amino-acid polypeptide reads, in one-letter code: Calmodulin-binding transcription activator 4 (1016 aa).

Positions 38 to 164 (ISTLYQEAHS…YRDVSEREEG (127 aa)) form a DNA-binding region, CG-1. Residues 324–343 (KNGSGPSGGTGGSGDQGSES) are disordered. Gly residues predominate over residues 328 to 338 (GPSGGTGGSGD). ANK repeat units lie at residues 647–676 (QEQGIIHMVAGLGFEWAFYPILAHGVNVDF), 680–709 (KGWSALHWAAQFGSEKMVAALIASGASAGA), and 719–748 (NGKTAASIAASNGHKGLAGYLSEVALTNHL). The interval 753-786 (LEETENSKDTAQVQTEKTLNSISEQSPSGNEDQV) is disordered. Residues 761-785 (DTAQVQTEKTLNSISEQSPSGNEDQ) are compositionally biased toward polar residues. IQ domains follow at residues 798-827 (AAQAAARIQAAFRAHSFRKRKQREAALVAC), 855-884 (YNSAALSIQKNFRGYKDRKCFLELRQKVVK), and 878-907 (LRQKVVKIQAHVRGYQIRKNYKVICWAVRI). The tract at residues 903-925 (WAVRILDKVVLRWRRKGVGLRGF) is calmodulin-binding. Residues Ser-935 and Ser-962 each carry the phosphoserine modification.

The protein belongs to the CAMTA family. In terms of tissue distribution, expressed in roots, stems, leaves, flowers and siliques.

The protein resides in the nucleus. Its function is as follows. Transcription activator that binds to the DNA consensus sequence 5'-[ACG]CGCG[GTC]-3'. Regulates transcriptional activity in response to calcium signals. Binds calmodulin in a calcium-dependent manner. Involved together with CAMTA2 and CAMTA3 in the positive regulation of a general stress response. The chain is Calmodulin-binding transcription activator 4 from Arabidopsis thaliana (Mouse-ear cress).